Consider the following 182-residue polypeptide: Methyl-coenzyme M reductase operon protein C (182 aa).

As to quaternary structure, MCR is composed of three subunits: alpha, beta, and gamma. The function of proteins C and D is not known.

The chain is Methyl-coenzyme M reductase operon protein C (mcrC) from Methanococcus voltae.